The following is a 611-amino-acid chain: MFS siderochrome iron transporter C (611 aa).

Residues 1-25 (MPFLDHRTGPSYGTIDQMEQHSDDE) are disordered. An N-linked (GlcNAc...) asparagine glycan is attached at N62. The next 14 helical transmembrane spans lie at 71 to 91 (VIAY…GQTV), 107 to 127 (LIST…PPMA), 136 to 156 (FEAF…MAAS), 165 to 185 (AQIF…VFIA), 194 to 214 (AFLA…GPTI), 228 to 248 (YGMW…SLLL), 282 to 302 (MGGL…LTLA), 313 to 333 (SIVA…FWES), 353 to 373 (ALAG…SVQP), 393 to 413 (VTQT…ILIK), 418 to 438 (YRAF…LMMV), 449 to 469 (ILVT…PVQL), 486 to 506 (MFLT…GAVW), and 560 to 580 (LLIL…AMED). A disordered region spans residues 592–611 (VDPVPAEEGEIEPNRHVKRT).

It belongs to the major facilitator superfamily.

The protein localises to the membrane. Its function is as follows. Major facilitator transporter that contributes to the maintenance of intracellular siderophore ferricrocin (FC) levels. Plays a role in conidiation and confers protection against oxidative stress. Also contributes to fungal virulence in the Galleria mellonella animal model system. Does not appear to play a role in either siderophore export or uptake. The polypeptide is MFS siderochrome iron transporter C (Aspergillus fumigatus (strain ATCC MYA-4609 / CBS 101355 / FGSC A1100 / Af293) (Neosartorya fumigata)).